Consider the following 590-residue polypeptide: Methionine--tRNA ligase, mitochondrial (590 aa).

A mitochondrion-targeting transit peptide spans 1 to 26; the sequence is MRTRFLFLTSGCKAVPELHKIVLANA. The short motif at 51-61 is the 'HIGH' region element; that stretch reads FYVNASPHLGH. Positions 342–346 match the 'KMSKS' region motif; sequence KMSKS. An ATP-binding site is contributed by K345. The disordered stretch occupies residues 570–590; sequence LESQRADQQKNRKMEKGSNLK. Positions 571 to 590 are enriched in basic and acidic residues; that stretch reads ESQRADQQKNRKMEKGSNLK.

The protein belongs to the class-I aminoacyl-tRNA synthetase family.

The protein resides in the mitochondrion matrix. It catalyses the reaction tRNA(Met) + L-methionine + ATP = L-methionyl-tRNA(Met) + AMP + diphosphate. This is Methionine--tRNA ligase, mitochondrial (mars2) from Takifugu rubripes (Japanese pufferfish).